Here is a 234-residue protein sequence, read N- to C-terminus: uncharacterized protein (234 aa).

Residues 62 to 99 (NEESISDLNSDNPGNSEPSDVESFVLSDEDENSEKDFS) form a disordered region. The segment covering 67–79 (SDLNSDNPGNSEP) has biased composition (polar residues).

This is an uncharacterized protein from Acanthamoeba polyphaga (Amoeba).